The primary structure comprises 161 residues: Troponin C, slow skeletal and cardiac muscles (161 aa).

At Met-1 the chain carries N-acetylmethionine. 4 consecutive EF-hand domains span residues 16–51, 52–87, 92–127, and 128–161; these read QKNE…LGQN, PTPE…CMKD, KTEE…TGET, and ITED…KGVE. Residues Asp-65, Asp-67, Ser-69, Thr-71, Glu-76, Asp-105, Asn-107, Asp-109, Tyr-111, Glu-116, Asp-141, Asn-143, Asp-145, Arg-147, and Glu-152 each contribute to the Ca(2+) site.

Belongs to the troponin C family.

Its function is as follows. Troponin is the central regulatory protein of striated muscle contraction. Tn consists of three components: Tn-I which is the inhibitor of actomyosin ATPase, Tn-T which contains the binding site for tropomyosin and Tn-C. The binding of calcium to Tn-C abolishes the inhibitory action of Tn on actin filaments. The chain is Troponin C, slow skeletal and cardiac muscles (TNNC1) from Gallus gallus (Chicken).